Here is a 106-residue protein sequence, read N- to C-terminus: Cell cycle protein GpsB (106 aa).

Residues 34-67 (LDVIIQDYDNFKQEIDRLKAENEKLKKSTPAVEQ) are a coiled coil. The segment at 55-83 (NEKLKKSTPAVEQSRSRSQQPPTSQVNYD) is disordered. Residues 70 to 79 (SRSQQPPTSQ) show a composition bias toward low complexity.

It belongs to the GpsB family. Forms polymers through the coiled coil domains. Interacts with PBP1, MreC and EzrA.

It is found in the cytoplasm. In terms of biological role, divisome component that associates with the complex late in its assembly, after the Z-ring is formed, and is dependent on DivIC and PBP2B for its recruitment to the divisome. Together with EzrA, is a key component of the system that regulates PBP1 localization during cell cycle progression. Its main role could be the removal of PBP1 from the cell pole after pole maturation is completed. Also contributes to the recruitment of PBP1 to the division complex. Not essential for septum formation. This chain is Cell cycle protein GpsB, found in Oceanobacillus iheyensis (strain DSM 14371 / CIP 107618 / JCM 11309 / KCTC 3954 / HTE831).